A 234-amino-acid chain; its full sequence is GTP cyclohydrolase 1 type 2 homolog (234 aa).

A divalent metal cation contacts are provided by His-61, His-62, Asp-80, His-195, and Glu-199.

It belongs to the GTP cyclohydrolase I type 2/NIF3 family. Homohexamer.

The chain is GTP cyclohydrolase 1 type 2 homolog from Methanothermobacter thermautotrophicus (strain ATCC 29096 / DSM 1053 / JCM 10044 / NBRC 100330 / Delta H) (Methanobacterium thermoautotrophicum).